A 165-amino-acid chain; its full sequence is NAD(P)H-quinone oxidoreductase subunit J, chloroplastic (165 aa).

It belongs to the complex I 30 kDa subunit family. As to quaternary structure, NDH is composed of at least 16 different subunits, 5 of which are encoded in the nucleus.

The protein resides in the plastid. It localises to the chloroplast thylakoid membrane. It carries out the reaction a plastoquinone + NADH + (n+1) H(+)(in) = a plastoquinol + NAD(+) + n H(+)(out). The catalysed reaction is a plastoquinone + NADPH + (n+1) H(+)(in) = a plastoquinol + NADP(+) + n H(+)(out). In terms of biological role, NDH shuttles electrons from NAD(P)H:plastoquinone, via FMN and iron-sulfur (Fe-S) centers, to quinones in the photosynthetic chain and possibly in a chloroplast respiratory chain. The immediate electron acceptor for the enzyme in this species is believed to be plastoquinone. Couples the redox reaction to proton translocation, and thus conserves the redox energy in a proton gradient. The chain is NAD(P)H-quinone oxidoreductase subunit J, chloroplastic from Ipomoea purpurea (Common morning glory).